The primary structure comprises 259 residues: Hemin import ATP-binding protein HmuV (259 aa).

The region spanning 8 to 242 is the ABC transporter domain; that stretch reads ISANNISYRI…KMIENVYGHK (235 aa). 40–47 lines the ATP pocket; that stretch reads GPNGAGKS.

The protein belongs to the ABC transporter superfamily. Heme (hemin) importer (TC 3.A.1.14.5) family. As to quaternary structure, the complex is composed of two ATP-binding proteins (HmuV), two transmembrane proteins (HmuU) and a solute-binding protein (HmuT).

Its subcellular location is the cell inner membrane. Functionally, part of the ABC transporter complex HmuTUV involved in hemin import. Responsible for energy coupling to the transport system. The chain is Hemin import ATP-binding protein HmuV from Aliivibrio fischeri (strain ATCC 700601 / ES114) (Vibrio fischeri).